Reading from the N-terminus, the 613-residue chain is tRNA 5-methylaminomethyl-2-thiouridine biosynthesis bifunctional protein MnmC (613 aa).

The tRNA (mnm(5)s(2)U34)-methyltransferase stretch occupies residues 1–225; it reads MKKAKLIFKD…KREMIKAYLE (225 aa). Positions 252 to 613 are FAD-dependent cmnm(5)s(2)U34 oxidoreductase; it reads IGAGISSAVL…FLVRKLKKGL (362 aa).

It in the N-terminal section; belongs to the methyltransferase superfamily. tRNA (mnm(5)s(2)U34)-methyltransferase family. The protein in the C-terminal section; belongs to the DAO family. FAD is required as a cofactor.

Its subcellular location is the cytoplasm. It carries out the reaction 5-aminomethyl-2-thiouridine(34) in tRNA + S-adenosyl-L-methionine = 5-methylaminomethyl-2-thiouridine(34) in tRNA + S-adenosyl-L-homocysteine + H(+). Functionally, catalyzes the last two steps in the biosynthesis of 5-methylaminomethyl-2-thiouridine (mnm(5)s(2)U) at the wobble position (U34) in tRNA. Catalyzes the FAD-dependent demodification of cmnm(5)s(2)U34 to nm(5)s(2)U34, followed by the transfer of a methyl group from S-adenosyl-L-methionine to nm(5)s(2)U34, to form mnm(5)s(2)U34. The polypeptide is tRNA 5-methylaminomethyl-2-thiouridine biosynthesis bifunctional protein MnmC (Campylobacter jejuni subsp. doylei (strain ATCC BAA-1458 / RM4099 / 269.97)).